The sequence spans 464 residues: ATP synthase subunit beta 2 (464 aa).

Residue 153 to 160 participates in ATP binding; sequence GGAGVGKT.

Belongs to the ATPase alpha/beta chains family. As to quaternary structure, F-type ATPases have 2 components, CF(1) - the catalytic core - and CF(0) - the membrane proton channel. CF(1) has five subunits: alpha(3), beta(3), gamma(1), delta(1), epsilon(1). CF(0) has three main subunits: a(1), b(2) and c(9-12). The alpha and beta chains form an alternating ring which encloses part of the gamma chain. CF(1) is attached to CF(0) by a central stalk formed by the gamma and epsilon chains, while a peripheral stalk is formed by the delta and b chains.

It localises to the cell inner membrane. It catalyses the reaction ATP + H2O + 4 H(+)(in) = ADP + phosphate + 5 H(+)(out). Functionally, produces ATP from ADP in the presence of a proton gradient across the membrane. The catalytic sites are hosted primarily by the beta subunits. The protein is ATP synthase subunit beta 2 of Paraburkholderia xenovorans (strain LB400).